Reading from the N-terminus, the 91-residue chain is Mercuric transport protein periplasmic component (91 aa).

Positions Met1 to Ala19 are cleaved as a signal peptide. The 67-residue stretch at Gln22–Ser88 folds into the HMA domain. Residues Cys33 and Cys36 each contribute to the Hg(2+) site.

This sequence belongs to the MerP family. In terms of assembly, monomer.

It localises to the periplasm. Involved in mercury resistance. Acts as a mercury scavenger that specifically binds to a mercuric ion in the periplasm and probably passes it to the cytoplasmic mercuric reductase MerA via the mercuric transport protein MerT. This Shigella flexneri protein is Mercuric transport protein periplasmic component.